The chain runs to 538 residues: Chaperonin GroEL 2 (538 aa).

Residues threonine 29–proline 32, aspartate 86–threonine 90, glycine 412, asparagine 479–alanine 481, and aspartate 495 contribute to the ATP site.

Belongs to the chaperonin (HSP60) family. As to quaternary structure, forms a cylinder of 14 subunits composed of two heptameric rings stacked back-to-back. Interacts with the co-chaperonin GroES.

The protein localises to the cytoplasm. The catalysed reaction is ATP + H2O + a folded polypeptide = ADP + phosphate + an unfolded polypeptide.. In terms of biological role, together with its co-chaperonin GroES, plays an essential role in assisting protein folding. The GroEL-GroES system forms a nano-cage that allows encapsulation of the non-native substrate proteins and provides a physical environment optimized to promote and accelerate protein folding. The chain is Chaperonin GroEL 2 from Renibacterium salmoninarum (strain ATCC 33209 / DSM 20767 / JCM 11484 / NBRC 15589 / NCIMB 2235).